Reading from the N-terminus, the 373-residue chain is Homoserine O-acetyltransferase (373 aa).

The region spanning 52–356 (NVVMVLHALT…VYGHDGFLVE (305 aa)) is the AB hydrolase-1 domain. Ser-157 (nucleophile) is an active-site residue. Arg-227 is a substrate binding site. Catalysis depends on residues Asp-320 and His-350. Position 351 (Asp-351) interacts with substrate.

The protein belongs to the AB hydrolase superfamily. MetX family. As to quaternary structure, homodimer.

Its subcellular location is the cytoplasm. It catalyses the reaction L-homoserine + acetyl-CoA = O-acetyl-L-homoserine + CoA. The protein operates within amino-acid biosynthesis; L-methionine biosynthesis via de novo pathway; O-acetyl-L-homoserine from L-homoserine: step 1/1. Transfers an acetyl group from acetyl-CoA to L-homoserine, forming acetyl-L-homoserine. This is Homoserine O-acetyltransferase from Mycobacterium sp. (strain KMS).